The sequence spans 378 residues: Queuine tRNA-ribosyltransferase (378 aa).

Residue D92 is the Proton acceptor of the active site. Substrate-binding positions include 92–96 (DSGGF), D146, Q188, and G215. The interval 246 to 252 (GVGTHLE) is RNA binding. D265 functions as the Nucleophile in the catalytic mechanism. Residues 270–274 (TRLAR) are RNA binding; important for wobble base 34 recognition. Residues C303, C305, C308, and H334 each coordinate Zn(2+).

Belongs to the queuine tRNA-ribosyltransferase family. Homodimer. Within each dimer, one monomer is responsible for RNA recognition and catalysis, while the other monomer binds to the replacement base PreQ1. The cofactor is Zn(2+).

It carries out the reaction 7-aminomethyl-7-carbaguanine + guanosine(34) in tRNA = 7-aminomethyl-7-carbaguanosine(34) in tRNA + guanine. Its pathway is tRNA modification; tRNA-queuosine biosynthesis. Functionally, catalyzes the base-exchange of a guanine (G) residue with the queuine precursor 7-aminomethyl-7-deazaguanine (PreQ1) at position 34 (anticodon wobble position) in tRNAs with GU(N) anticodons (tRNA-Asp, -Asn, -His and -Tyr). Catalysis occurs through a double-displacement mechanism. The nucleophile active site attacks the C1' of nucleotide 34 to detach the guanine base from the RNA, forming a covalent enzyme-RNA intermediate. The proton acceptor active site deprotonates the incoming PreQ1, allowing a nucleophilic attack on the C1' of the ribose to form the product. After dissociation, two additional enzymatic reactions on the tRNA convert PreQ1 to queuine (Q), resulting in the hypermodified nucleoside queuosine (7-(((4,5-cis-dihydroxy-2-cyclopenten-1-yl)amino)methyl)-7-deazaguanosine). This chain is Queuine tRNA-ribosyltransferase, found in Thermosynechococcus vestitus (strain NIES-2133 / IAM M-273 / BP-1).